The following is a 149-amino-acid chain: D-aminoacyl-tRNA deacylase (149 aa).

Positions Gly137–Pro138 match the Gly-cisPro motif, important for rejection of L-amino acids motif.

It belongs to the DTD family. In terms of assembly, homodimer.

The protein localises to the cytoplasm. The catalysed reaction is glycyl-tRNA(Ala) + H2O = tRNA(Ala) + glycine + H(+). The enzyme catalyses a D-aminoacyl-tRNA + H2O = a tRNA + a D-alpha-amino acid + H(+). Its function is as follows. An aminoacyl-tRNA editing enzyme that deacylates mischarged D-aminoacyl-tRNAs. Also deacylates mischarged glycyl-tRNA(Ala), protecting cells against glycine mischarging by AlaRS. Acts via tRNA-based rather than protein-based catalysis; rejects L-amino acids rather than detecting D-amino acids in the active site. By recycling D-aminoacyl-tRNA to D-amino acids and free tRNA molecules, this enzyme counteracts the toxicity associated with the formation of D-aminoacyl-tRNA entities in vivo and helps enforce protein L-homochirality. This is D-aminoacyl-tRNA deacylase from Syntrophobacter fumaroxidans (strain DSM 10017 / MPOB).